The primary structure comprises 264 residues: Thymidylate synthase (264 aa).

Residue Arg21 coordinates dUMP. His51 is a (6R)-5,10-methylene-5,6,7,8-tetrahydrofolate binding site. Residue 126 to 127 (RR) participates in dUMP binding. Cys146 serves as the catalytic Nucleophile. DUMP contacts are provided by residues 166-169 (RSCD), Asn177, and 207-209 (HLY). Asp169 is a binding site for (6R)-5,10-methylene-5,6,7,8-tetrahydrofolate. Ala263 contributes to the (6R)-5,10-methylene-5,6,7,8-tetrahydrofolate binding site.

The protein belongs to the thymidylate synthase family. Bacterial-type ThyA subfamily. In terms of assembly, homodimer.

The protein localises to the cytoplasm. It carries out the reaction dUMP + (6R)-5,10-methylene-5,6,7,8-tetrahydrofolate = 7,8-dihydrofolate + dTMP. Its pathway is pyrimidine metabolism; dTTP biosynthesis. Its function is as follows. Catalyzes the reductive methylation of 2'-deoxyuridine-5'-monophosphate (dUMP) to 2'-deoxythymidine-5'-monophosphate (dTMP) while utilizing 5,10-methylenetetrahydrofolate (mTHF) as the methyl donor and reductant in the reaction, yielding dihydrofolate (DHF) as a by-product. This enzymatic reaction provides an intracellular de novo source of dTMP, an essential precursor for DNA biosynthesis. This chain is Thymidylate synthase, found in Shewanella denitrificans (strain OS217 / ATCC BAA-1090 / DSM 15013).